Here is a 428-residue protein sequence, read N- to C-terminus: CinA-like protein (428 aa).

Belongs to the CinA family.

This chain is CinA-like protein, found in Endomicrobium trichonymphae.